Reading from the N-terminus, the 245-residue chain is 1-(5-phosphoribosyl)-5-[(5-phosphoribosylamino)methylideneamino] imidazole-4-carboxamide isomerase (245 aa).

D7 acts as the Proton acceptor in catalysis. Residue D129 is the Proton donor of the active site.

It belongs to the HisA/HisF family.

It is found in the cytoplasm. The enzyme catalyses 1-(5-phospho-beta-D-ribosyl)-5-[(5-phospho-beta-D-ribosylamino)methylideneamino]imidazole-4-carboxamide = 5-[(5-phospho-1-deoxy-D-ribulos-1-ylimino)methylamino]-1-(5-phospho-beta-D-ribosyl)imidazole-4-carboxamide. It participates in amino-acid biosynthesis; L-histidine biosynthesis; L-histidine from 5-phospho-alpha-D-ribose 1-diphosphate: step 4/9. The chain is 1-(5-phosphoribosyl)-5-[(5-phosphoribosylamino)methylideneamino] imidazole-4-carboxamide isomerase from Escherichia coli O45:K1 (strain S88 / ExPEC).